Consider the following 390-residue polypeptide: Galactokinase (390 aa).

Residue 34–37 (EHTD) coordinates substrate. Residues Ser68 and 122–128 (GSGLSSS) contribute to the ATP site. Residues Ser128 and Glu160 each contribute to the Mg(2+) site. Asp172 functions as the Proton acceptor in the catalytic mechanism. Tyr221 is a binding site for substrate.

This sequence belongs to the GHMP kinase family. GalK subfamily.

Its subcellular location is the cytoplasm. It carries out the reaction alpha-D-galactose + ATP = alpha-D-galactose 1-phosphate + ADP + H(+). Its pathway is carbohydrate metabolism; galactose metabolism. Functionally, catalyzes the transfer of the gamma-phosphate of ATP to D-galactose to form alpha-D-galactose-1-phosphate (Gal-1-P). The protein is Galactokinase of Chloroflexus aurantiacus (strain ATCC 29366 / DSM 635 / J-10-fl).